A 706-amino-acid polypeptide reads, in one-letter code: Polyribonucleotide nucleotidyltransferase (706 aa).

Residues aspartate 483 and aspartate 489 each contribute to the Mg(2+) site. The KH domain occupies 550–609 (PRITTIWVKTDKIRDVIGTGGKNIRNITETTGVTVDIEDTGRINIASTSKEACDLAIQMI). The 69-residue stretch at 619-687 (GKLYMGIVKK…KNGKVKLSRK (69 aa)) folds into the S1 motif domain.

It belongs to the polyribonucleotide nucleotidyltransferase family. Mg(2+) serves as cofactor.

The protein localises to the cytoplasm. It catalyses the reaction RNA(n+1) + phosphate = RNA(n) + a ribonucleoside 5'-diphosphate. Involved in mRNA degradation. Catalyzes the phosphorolysis of single-stranded polyribonucleotides processively in the 3'- to 5'-direction. In Pelobacter propionicus (strain DSM 2379 / NBRC 103807 / OttBd1), this protein is Polyribonucleotide nucleotidyltransferase.